The chain runs to 182 residues: Ribosomal RNA small subunit methyltransferase G (182 aa).

S-adenosyl-L-methionine contacts are provided by residues Gly-58, Phe-63, 109-110 (IE), and Arg-123.

The protein belongs to the methyltransferase superfamily. RNA methyltransferase RsmG family.

Its subcellular location is the cytoplasm. The catalysed reaction is guanosine(527) in 16S rRNA + S-adenosyl-L-methionine = N(7)-methylguanosine(527) in 16S rRNA + S-adenosyl-L-homocysteine. In terms of biological role, specifically methylates the N7 position of guanine in position 527 of 16S rRNA. The polypeptide is Ribosomal RNA small subunit methyltransferase G (Campylobacter fetus subsp. fetus (strain 82-40)).